The following is a 126-amino-acid chain: Glycine cleavage system H protein (126 aa).

One can recognise a Lipoyl-binding domain in the interval 23–104 (TLTVGITDHA…PYESWLFKIK (82 aa)). Lysine 64 carries the N6-lipoyllysine modification.

Belongs to the GcvH family. The glycine cleavage system is composed of four proteins: P, T, L and H. Requires (R)-lipoate as cofactor.

Functionally, the glycine cleavage system catalyzes the degradation of glycine. The H protein shuttles the methylamine group of glycine from the P protein to the T protein. The protein is Glycine cleavage system H protein of Paraburkholderia xenovorans (strain LB400).